The chain runs to 499 residues: Protein nucleotidyltransferase YdiU (499 aa).

Residues G95, G97, R98, K117, D129, G130, R180, and R187 each contribute to the ATP site. D256 functions as the Proton acceptor in the catalytic mechanism. Residues N257 and D266 each coordinate Mg(2+). D266 contacts ATP.

This sequence belongs to the SELO family. It depends on Mg(2+) as a cofactor. Mn(2+) serves as cofactor.

It catalyses the reaction L-seryl-[protein] + ATP = 3-O-(5'-adenylyl)-L-seryl-[protein] + diphosphate. The enzyme catalyses L-threonyl-[protein] + ATP = 3-O-(5'-adenylyl)-L-threonyl-[protein] + diphosphate. It carries out the reaction L-tyrosyl-[protein] + ATP = O-(5'-adenylyl)-L-tyrosyl-[protein] + diphosphate. The catalysed reaction is L-histidyl-[protein] + UTP = N(tele)-(5'-uridylyl)-L-histidyl-[protein] + diphosphate. It catalyses the reaction L-seryl-[protein] + UTP = O-(5'-uridylyl)-L-seryl-[protein] + diphosphate. The enzyme catalyses L-tyrosyl-[protein] + UTP = O-(5'-uridylyl)-L-tyrosyl-[protein] + diphosphate. Nucleotidyltransferase involved in the post-translational modification of proteins. It can catalyze the addition of adenosine monophosphate (AMP) or uridine monophosphate (UMP) to a protein, resulting in modifications known as AMPylation and UMPylation. The sequence is that of Protein nucleotidyltransferase YdiU from Dechloromonas aromatica (strain RCB).